A 154-amino-acid chain; its full sequence is Protein X (154 aa).

The interval 28-48 (RPLPGPLGTLPPASPPAVPTD) is disordered. A mitochondrial targeting sequence region spans residues 68–117 (PCALRFTSARRMETTVNAHGNLPKVLHKRTLGLSAMSTTDLEAYFKDCVF).

This sequence belongs to the orthohepadnavirus protein X family. As to quaternary structure, may form homodimer. May interact with host CEBPA, CFLAR, CREB1, DDB1, E4F1, HBXIP, HSPD1/HSP60, NFKBIA, POLR2E and SMAD4. Interacts with host SMC5-SMC6 complex and induces its degradation. Interacts with host TRPC4AP; leading to prevent ubiquitination of TRPC4AP. Interacts with host PLSCR1; this interaction promotes ubiquitination and degradation of HBx and impairs HBx-mediated cell proliferation. Post-translationally, a fraction may be phosphorylated in insect cells and HepG2 cells, a human hepatoblastoma cell line. Phosphorylated in vitro by host protein kinase C or mitogen-activated protein kinase. N-acetylated in insect cells.

Its subcellular location is the host cytoplasm. It is found in the host nucleus. The protein resides in the host mitochondrion. Functionally, multifunctional protein that plays a role in silencing host antiviral defenses and promoting viral transcription. Does not seem to be essential for HBV infection. May be directly involved in development of cirrhosis and liver cancer (hepatocellular carcinoma). Most of cytosolic activities involve modulation of cytosolic calcium. The effect on apoptosis is controversial depending on the cell types in which the studies have been conducted. May induce apoptosis by localizing in mitochondria and causing loss of mitochondrial membrane potential. May also modulate apoptosis by binding host CFLAR, a key regulator of the death-inducing signaling complex (DISC). Promotes viral transcription by using the host E3 ubiquitin ligase DDB1 to target the SMC5-SMC6 complex to proteasomal degradation. This host complex would otherwise bind to viral episomal DNA, and prevents its transcription. Moderately stimulates transcription of many different viral and cellular transcription elements. Promoters and enhancers stimulated by HBx contain DNA binding sites for NF-kappa-B, AP-1, AP-2, c-EBP, ATF/CREB, or the calcium-activated factor NF-AT. The sequence is that of Protein X from Hepatitis B virus genotype B2 subtype adw (isolate China/patient4/1996) (HBV-B).